Here is a 2346-residue protein sequence, read N- to C-terminus: Highly reducing polyketide synthase claI (2346 aa).

Residues T10–D412 form the Ketosynthase family 3 (KS3) domain. Residues C183, H295, and H335 each act as for beta-ketoacyl synthase activity in the active site. The segment at I530–E842 is malonyl-CoA:ACP transacylase (MAT) domain. S622 acts as the For malonyltransferase activity in catalysis. The interval H912–S1048 is N-terminal hotdog fold. Residues H912–D1213 are dehydratase (DH) domain. In terms of domain architecture, PKS/mFAS DH spans H912–Q1218. The active-site Proton acceptor; for dehydratase activity is H944. Positions I1060–Q1218 are C-terminal hotdog fold. The Proton donor; for dehydratase activity role is filled by D1124. Positions G1633–I1946 are enoyl reductase (ER) domain. Residues T1972–A2151 are ketoreductase (KR) domain. Positions S2258–V2336 constitute a Carrier domain. At S2296 the chain carries O-(pantetheine 4'-phosphoryl)serine.

Requires pantetheine 4'-phosphate as cofactor.

It functions in the pathway secondary metabolite biosynthesis. Its function is as follows. Highly reducing polyketide synthase; part of the cla gene cluster that produces clavatol and ortho-quinone methide. The clavatol biosynthesis cluster cla and the terrestric acid cluster tra are both involved in the production of peniphenones and penilactones. The non-reducing PKS claF is responsible for the formation of clavatol from successive condensations of 3 malonyl-CoA units, presumably with a simple acetyl-CoA starter unit, and 2 methylation steps. The esterase claE probably collaborates with claF by catalyzing the hydrolysis of ACP-bound acyl intermediates to free the ACP from stalled intermediates. The clavatol oxidase claD then converts clavatol to hydroxyclavatol. Spontaneous dehydration of hydroxyclavatol leads to the accumulation of the highly active ortho-quinone methide. On the other hand, the PKS-NRPS hybrid traA is involved in the formation of crustosic acid, with the help of traB and traD. The polyketide synthase module (PKS) of traA is responsible for the synthesis of the polyketide backbone via the condensation of an acetyl-CoA starter unit with 3 malonyl-CoA units. The downstream nonribosomal peptide synthetase (NRPS) module then amidates the carboxyl end of the polyketide with L-malic acid. Because traA lacks a designated enoylreductase (ER) domain, the required activity is provided the enoyl reductase traG. Crustosic acid undergoes decarboxylation and isomerization to the terrestric acid, catalyzed by the 2-oxoglutarate-dependent dioxygenase traH. Both acids are further converted to the 2 gamma-butyrolactones (R)-5-methyltetronic acid and (S)-5-carboxylmethyltetronic acid, with involvement of the cytochrome P450 monooxygenase claJ. Spontaneous addition of the methide to these gamma-butyrolactones leads to peniphenone D and penilactone D, which undergo again stereospecific attacking by methide to give penilactones A and B. The function of the highly reducing polyketide synthase claI has not been investigated yet. The sequence is that of Highly reducing polyketide synthase claI from Penicillium crustosum (Blue mold fungus).